Here is an 859-residue protein sequence, read N- to C-terminus: Protein EFR3 homolog (859 aa).

Disordered regions lie at residues 638-657 (DDPLSSTAVNGTIPEGTPRT) and 697-724 (RDGNGDSWQREDGQNFDSTDGRESPDGY). The span at 704-722 (WQREDGQNFDSTDGRESPD) shows a compositional bias: basic and acidic residues.

The protein belongs to the EFR3 family.

In Caenorhabditis briggsae, this protein is Protein EFR3 homolog.